Reading from the N-terminus, the 414-residue chain is L-cysteine:1D-myo-inositol 2-amino-2-deoxy-alpha-D-glucopyranoside ligase (414 aa).

C44 is a binding site for Zn(2+). L-cysteinyl-5'-AMP-binding positions include 44–47, T59, and 82–84; these read CGIT and NIT. Residues 46-56 carry the 'HIGH' region motif; the sequence is ITPYDSTHLGH. The short motif at 188 to 193 is the 'ERGGDP' region element; it reads ERGGDP. W228 contacts L-cysteinyl-5'-AMP. C232 serves as a coordination point for Zn(2+). An L-cysteinyl-5'-AMP-binding site is contributed by 250–252; the sequence is GSD. Zn(2+) is bound at residue H257. I284 provides a ligand contact to L-cysteinyl-5'-AMP. The 'KMSKS' region motif lies at 290–294; sequence KMSKS.

Belongs to the class-I aminoacyl-tRNA synthetase family. MshC subfamily. In terms of assembly, monomer. It depends on Zn(2+) as a cofactor.

The catalysed reaction is 1D-myo-inositol 2-amino-2-deoxy-alpha-D-glucopyranoside + L-cysteine + ATP = 1D-myo-inositol 2-(L-cysteinylamino)-2-deoxy-alpha-D-glucopyranoside + AMP + diphosphate + H(+). Catalyzes the ATP-dependent condensation of GlcN-Ins and L-cysteine to form L-Cys-GlcN-Ins. This chain is L-cysteine:1D-myo-inositol 2-amino-2-deoxy-alpha-D-glucopyranoside ligase, found in Corynebacterium aurimucosum (strain ATCC 700975 / DSM 44827 / CIP 107346 / CN-1) (Corynebacterium nigricans).